A 460-amino-acid chain; its full sequence is Exodeoxyribonuclease 7 large subunit (460 aa).

The disordered stretch occupies residues 438-460 (ARVEKVNREEEKQSGSQKNGTRD). A compositionally biased stretch (basic and acidic residues) spans 439–450 (RVEKVNREEEKQ). Over residues 451–460 (SGSQKNGTRD) the composition is skewed to polar residues.

The protein belongs to the XseA family. As to quaternary structure, heterooligomer composed of large and small subunits.

Its subcellular location is the cytoplasm. It catalyses the reaction Exonucleolytic cleavage in either 5'- to 3'- or 3'- to 5'-direction to yield nucleoside 5'-phosphates.. Functionally, bidirectionally degrades single-stranded DNA into large acid-insoluble oligonucleotides, which are then degraded further into small acid-soluble oligonucleotides. This Brevibacillus brevis (strain 47 / JCM 6285 / NBRC 100599) protein is Exodeoxyribonuclease 7 large subunit.